Here is a 449-residue protein sequence, read N- to C-terminus: C4-dicarboxylate transport protein (449 aa).

8 helical membrane-spanning segments follow: residues 18 to 38 (PFYL…ALLG), 61 to 81 (MIIS…VAHV), 93 to 113 (VYFL…AHVV), 159 to 179 (FVGD…IALA), 202 to 222 (LVQM…AFTI), 244 to 264 (SLLF…FSIL), 346 to 366 (LFLV…AGFI), and 369 to 389 (AATL…ILGV).

It belongs to the dicarboxylate/amino acid:cation symporter (DAACS) (TC 2.A.23) family.

The protein localises to the cell inner membrane. In terms of biological role, responsible for the transport of dicarboxylates such as succinate, fumarate, and malate from the periplasm across the membrane. The chain is C4-dicarboxylate transport protein from Xylella fastidiosa (strain M23).